A 329-amino-acid chain; its full sequence is MTKLGRRNDGGGKSHRSSTKRQRRTSVSVDDPSPGEEEEKTLVVLTDDSDSEEDDKPLGDVLRTCRKRRVSSPKSVTLPNSNVLECPNCFDPLKKPIFQCNNGHLACFLCCIKLKKRCSFCKLPIGDVRCRAMEKVIKAGLVSCSNAIYGCKQSTTYGNQLQSHEKVCVFAPCSCPIKDCNYIGFYKDLINHFRATHKVSPGDINSFVFDRPVIFGLDLDSSDKMVIFVEEKQGNLFVVQGFIGSHGVYATVSHIAPMVPEVRKFSCSLARLRPYSTLRLGLEVKNIQKLRSQEEQPQEDFLLIPSYMVNGDHMKMEISIGDKNDYTHI.

Residues 1 to 12 (MTKLGRRNDGGG) show a composition bias toward basic and acidic residues. Residues 1-58 (MTKLGRRNDGGGKSHRSSTKRQRRTSVSVDDPSPGEEEEKTLVVLTDDSDSEEDDKPL) are disordered. The span at 13 to 24 (KSHRSSTKRQRR) shows a compositional bias: basic residues. The RING-type; degenerate zinc finger occupies 86–122 (CPNCFDPLKKPIFQCNNGHLACFLCCIKLKKRCSFCK). The SBD stretch occupies residues 136–325 (VIKAGLVSCS…MEISIGDKND (190 aa)). The SIAH-type zinc-finger motif lies at 139–198 (AGLVSCSNAIYGCKQSTTYGNQLQSHEKVCVFAPCSCPIKDCNYIGFYKDLINHFRATHK). C144, C151, H164, C168, C175, C180, H192, and H197 together coordinate Zn(2+).

It belongs to the SINA (Seven in absentia) family.

The catalysed reaction is S-ubiquitinyl-[E2 ubiquitin-conjugating enzyme]-L-cysteine + [acceptor protein]-L-lysine = [E2 ubiquitin-conjugating enzyme]-L-cysteine + N(6)-ubiquitinyl-[acceptor protein]-L-lysine.. Its pathway is protein modification; protein ubiquitination. Functionally, E3 ubiquitin-protein ligase that mediates ubiquitination and subsequent proteasomal degradation of target proteins. E3 ubiquitin ligases accept ubiquitin from an E2 ubiquitin-conjugating enzyme in the form of a thioester and then directly transfers the ubiquitin to targeted substrates. It probably triggers the ubiquitin-mediated degradation of different substrates. The sequence is that of E3 ubiquitin-protein ligase SINA-like 4 from Arabidopsis thaliana (Mouse-ear cress).